Consider the following 296-residue polypeptide: Coatomer subunit epsilon (296 aa).

It belongs to the COPE family. Oligomeric complex that consists of at least the alpha, beta, beta', gamma, delta, epsilon and zeta subunits. Interacts with the ESCRT-0 subunit VPS27.

It localises to the cytoplasm. It is found in the golgi apparatus membrane. Its subcellular location is the cytoplasmic vesicle. The protein localises to the COPI-coated vesicle membrane. The coatomer is a cytosolic protein complex that binds to dilysine motifs and reversibly associates with Golgi non-clathrin-coated vesicles, which further mediate biosynthetic protein transport from the ER, via the Golgi up to the trans Golgi network. The coatomer complex is required for budding from Golgi membranes, and is essential for the retrograde Golgi-to-ER transport of dilysine-tagged proteins. In Saccharomyces cerevisiae (strain ATCC 204508 / S288c) (Baker's yeast), this protein is Coatomer subunit epsilon (SEC28).